Here is a 165-residue protein sequence, read N- to C-terminus: Free methionine-R-sulfoxide reductase (165 aa).

The 101-residue stretch at 49–149 folds into the GAF domain; the sequence is LLEDDTLVLG…LRQLVAQLEK (101 aa).

Belongs to the free Met sulfoxide reductase family.

It carries out the reaction [thioredoxin]-disulfide + L-methionine + H2O = L-methionine (R)-S-oxide + [thioredoxin]-dithiol. Catalyzes the reversible oxidation-reduction of the R-enantiomer of free methionine sulfoxide to methionine. Specific for free L-methionine-(R)-S-oxide. The chain is Free methionine-R-sulfoxide reductase (msrC) from Escherichia coli (strain K12).